The primary structure comprises 290 residues: 4-hydroxybenzoate octaprenyltransferase (290 aa).

Helical transmembrane passes span 23 to 43, 46 to 66, 99 to 119, 141 to 161, 163 to 183, 213 to 233, 234 to 254, and 268 to 288; these read IGALLLLWPTLWALWVATPGV, LWILAVFVAGVWLMRAAGCVV, LFVVLVLISFLLVLTLNTMTI, LPQVVLGAAFGWSIPMAFAAV, ESVPLSCWLMFLANILWAVAY, LIIGILQIGVLALMAIIGELN, GLGWGYYWSILVAGALFVYQQ, and AFMNNNYVGLVLFLGLAMSYW.

The protein belongs to the UbiA prenyltransferase family. Requires Mg(2+) as cofactor.

Its subcellular location is the cell inner membrane. It carries out the reaction all-trans-octaprenyl diphosphate + 4-hydroxybenzoate = 4-hydroxy-3-(all-trans-octaprenyl)benzoate + diphosphate. It functions in the pathway cofactor biosynthesis; ubiquinone biosynthesis. In terms of biological role, catalyzes the prenylation of para-hydroxybenzoate (PHB) with an all-trans polyprenyl group. Mediates the second step in the final reaction sequence of ubiquinone-8 (UQ-8) biosynthesis, which is the condensation of the polyisoprenoid side chain with PHB, generating the first membrane-bound Q intermediate 3-octaprenyl-4-hydroxybenzoate. In Escherichia coli O6:K15:H31 (strain 536 / UPEC), this protein is 4-hydroxybenzoate octaprenyltransferase.